Consider the following 533-residue polypeptide: Glucosidase 2 subunit beta (533 aa).

The N-terminal stretch at 1 to 13 (MLLLLLLLPMCWA) is a signal peptide. Ser23 is modified (phosphoserine). 2 LDL-receptor class A domains span residues 36 to 70 (FTCL…AACP) and 71 to 112 (NGSF…IVCE). Intrachain disulfides connect Cys38–Cys57 and Cys55–Cys69. Position 48 (Asp48) interacts with substrate. 6 residues coordinate Ca(2+): Gln49, Asp52, Tyr54, Asp56, Asp62, and Glu63. Asp52 is a substrate binding site. N-linked (GlcNAc...) asparagine glycosylation is present at Asn71. Disulfide bonds link Cys76-Cys98, Cys96-Cys111, and Cys99-Cys115. Ser88 bears the Phosphoserine; by PKC mark. The Ca(2+) site is built by Asp93, Val95, Asp97, Asp103, and Glu104. Lys165 is subject to N6-succinyllysine. Ser167 carries the phosphoserine modification. EF-hand domains follow at residues 208-243 (RERE…DTDG) and 244-279 (DGAL…RDKY). The Ca(2+) site is built by Asp221, Asp223, Asp225, and Glu232. The interval 284–363 (LPTEYPPSPP…SPTEEDRMPP (80 aa)) is disordered. Acidic residues predominate over residues 312–336 (TEEEDEDEEDEETEEDEDEEDEDSQ). A phosphoserine; by PKC mark is found at Ser388 and Ser395. One can recognise an MRH domain in the interval 418–519 (SQCYELTTNE…ELMTPAACPE (102 aa)). Cysteines 420 and 433 form a disulfide. Phosphoserine; by PKC is present on Ser439. 2 disulfide bridges follow: Cys476–Cys505 and Cys490–Cys517. Asn481 carries N-linked (GlcNAc...) asparagine glycosylation. Positions 530–533 (HDEL) match the Prevents secretion from ER motif.

As to quaternary structure, heterodimer of a catalytic alpha subunit (GANAB) and a beta subunit (PRKCSH). Binds glycosylated PTPRC. In terms of tissue distribution, ubiquitous. Highly expressed in liver, spleen, lung, duodenum, stomach, adrenal gland, pituitary, testis, corpus luteum, uterus and fetal ovary.

Its subcellular location is the endoplasmic reticulum. Its pathway is glycan metabolism; N-glycan metabolism. Its function is as follows. Regulatory subunit of glucosidase II that cleaves sequentially the 2 innermost alpha-1,3-linked glucose residues from the Glc(2)Man(9)GlcNAc(2) oligosaccharide precursor of immature glycoproteins. Required for efficient PKD1/Polycystin-1 biogenesis and trafficking to the plasma membrane of the primary cilia. The chain is Glucosidase 2 subunit beta (PRKCSH) from Bos taurus (Bovine).